The sequence spans 552 residues: Ribulokinase (552 aa).

The protein belongs to the ribulokinase family.

It carries out the reaction D-ribulose + ATP = D-ribulose 5-phosphate + ADP + H(+). The catalysed reaction is L-ribulose + ATP = L-ribulose 5-phosphate + ADP + H(+). It functions in the pathway carbohydrate degradation; L-arabinose degradation via L-ribulose; D-xylulose 5-phosphate from L-arabinose (bacterial route): step 2/3. This is Ribulokinase from Bacillus licheniformis (strain ATCC 14580 / DSM 13 / JCM 2505 / CCUG 7422 / NBRC 12200 / NCIMB 9375 / NCTC 10341 / NRRL NRS-1264 / Gibson 46).